The sequence spans 410 residues: Probable intron-encoded endonuclease bI1 (410 aa).

The segment at 1-131 (MRLLKTHPIL…VLMMAIAFLG (131 aa)) is COB exon 1 encoded. 3 consecutive transmembrane segments (helical) span residues 32–52 (FGSLLGVCLIIQILTGVFLAM), 75–95 (GWLIRYLHANTASFFFIFVYL), and 112–132 (LLWSIGVIILVLMMAIAFLGF). The interval 132-410 (FNGQKYMCFY…KKNYIVKVIK (279 aa)) is COB intron 1 encoded. The region spanning 196–286 (PFSGIYMIVN…LETLKPEYNI (91 aa)) is the GIY-YIG domain.

It to endonucleases of group I introns of fungi and phage. The mature protein may arise from proteolytic cleavage of an in-frame translation of COB exon 1 plus intron 1, containing the bI1 open reading frame.

Its subcellular location is the mitochondrion. The protein localises to the membrane. Functionally, mitochondrial DNA endonuclease involved in intron homing. This chain is Probable intron-encoded endonuclease bI1 (bI1), found in Mycosarcoma maydis (Corn smut fungus).